Consider the following 259-residue polypeptide: Ribosomal RNA small subunit methyltransferase A (259 aa).

S-adenosyl-L-methionine contacts are provided by Asn-13, Leu-15, Gly-40, Glu-61, Asp-85, and Asn-103.

The protein belongs to the class I-like SAM-binding methyltransferase superfamily. rRNA adenine N(6)-methyltransferase family. RsmA subfamily.

Its subcellular location is the cytoplasm. It catalyses the reaction adenosine(1518)/adenosine(1519) in 16S rRNA + 4 S-adenosyl-L-methionine = N(6)-dimethyladenosine(1518)/N(6)-dimethyladenosine(1519) in 16S rRNA + 4 S-adenosyl-L-homocysteine + 4 H(+). Specifically dimethylates two adjacent adenosines (A1518 and A1519) in the loop of a conserved hairpin near the 3'-end of 16S rRNA in the 30S particle. May play a critical role in biogenesis of 30S subunits. The polypeptide is Ribosomal RNA small subunit methyltransferase A (Neisseria meningitidis serogroup A / serotype 4A (strain DSM 15465 / Z2491)).